A 245-amino-acid chain; its full sequence is MNVTLLIPARYGSSRFPGKPLAHINGKPMIQHVYERASLAKGLKDIYVATDDVRIKNAVESFGGKVVMTGENAASGTDRIDEAISILGLADDDLVINLQGDQPLIDPIVIEQLVSVCERHAGEFDMATLGVEIKDEAQLNDPNHVKVVFDNNHNALYFSRARIPFGRDTSDYPVYKHIGIYAYTRKFIQTFAKLPLGRLEELEKLEQLRALEYGYKIKVAISAFDFPEVDTPEDIRICEARLTVD.

It belongs to the KdsB family.

It is found in the cytoplasm. It catalyses the reaction 8-amino-3,8-dideoxy-alpha-D-manno-octulosonate + CTP = CMP-8-amino-3,8-dideoxy-alpha-D-manno-oct-2-ulosonate + diphosphate. The protein operates within bacterial outer membrane biogenesis; lipopolysaccharide biosynthesis. Activates KDO8N (a required 8-carbon sugar) for incorporation into bacterial lipopolysaccharide in the Shewanella genus. The chain is 8-amino-3,8-dideoxy-manno-octulosonate cytidylyltransferase from Shewanella pealeana (strain ATCC 700345 / ANG-SQ1).